A 326-amino-acid chain; its full sequence is Beta-ketoacyl-[acyl-carrier-protein] synthase III (326 aa).

Active-site residues include Cys-112 and His-251. The tract at residues 252–256 (QANSR) is ACP-binding. Asn-281 is an active-site residue.

This sequence belongs to the thiolase-like superfamily. FabH family. In terms of assembly, homodimer.

Its subcellular location is the cytoplasm. The catalysed reaction is malonyl-[ACP] + acetyl-CoA + H(+) = 3-oxobutanoyl-[ACP] + CO2 + CoA. The protein operates within lipid metabolism; fatty acid biosynthesis. Functionally, catalyzes the condensation reaction of fatty acid synthesis by the addition to an acyl acceptor of two carbons from malonyl-ACP. Catalyzes the first condensation reaction which initiates fatty acid synthesis and may therefore play a role in governing the total rate of fatty acid production. Possesses both acetoacetyl-ACP synthase and acetyl transacylase activities. Its substrate specificity determines the biosynthesis of branched-chain and/or straight-chain of fatty acids. This chain is Beta-ketoacyl-[acyl-carrier-protein] synthase III, found in Clostridium botulinum (strain Loch Maree / Type A3).